A 51-amino-acid chain; its full sequence is Small ribosomal subunit protein eS31 (51 aa).

4 residues coordinate Zn(2+): Cys-21, Cys-24, Cys-39, and Cys-42. The C4-type zinc-finger motif lies at 21-42 (CVRCSNGVFMADHGDRYACGKC).

Belongs to the eukaryotic ribosomal protein eS31 family. As to quaternary structure, part of the 30S ribosomal subunit. Zn(2+) serves as cofactor.

The chain is Small ribosomal subunit protein eS31 from Methanothermobacter thermautotrophicus (strain ATCC 29096 / DSM 1053 / JCM 10044 / NBRC 100330 / Delta H) (Methanobacterium thermoautotrophicum).